Reading from the N-terminus, the 434-residue chain is Putative ankyrin repeat protein FPV023 (434 aa).

ANK repeat units follow at residues 33-62 (RLKILLHKAIELRNIEAVRLLLNNDVDPVA), 134-163 (LTISRMEPSRQIEEIQIMDILLSKGIDINF), 167-197 (IGNTALHYACDYRNGLNMVRHLIKNGADINI), 201-230 (YGTTPLACAVSTRNIELVSILLDSGADPNS), 236-265 (IGTKVLHTAVGSGNFNIAKELIESGADPNI), 269-299 (AGVTPLHVAAIDEDSYALLELLLDNGADPNI), and 303-330 (NGTTPLFQAMHNYNRVKLLFMYGADINI).

This is Putative ankyrin repeat protein FPV023 from Fowlpox virus (strain NVSL) (FPV).